The sequence spans 468 residues: Abscisic acid 8'-hydroxylase 4 (468 aa).

Residues 4–24 traverse the membrane as a helical segment; that stretch reads IWFLVVPILILCLLLVRVIVS. A heme-binding site is contributed by C415.

The protein belongs to the cytochrome P450 family. Requires heme as cofactor. As to expression, mainly expressed in flowers. Lower expression in siliques, rosette leaves, roots and stems. Not expressed in dry seeds. Expressed in silique envelopes, but not in embryo or endosperm during the seed development.

The protein resides in the membrane. The enzyme catalyses 2-cis-(+)-abscisate + reduced [NADPH--hemoprotein reductase] + O2 = (+)-8'-hydroxyabscisate + oxidized [NADPH--hemoprotein reductase] + H2O + H(+). Its pathway is plant hormone degradation; abscisic acid degradation. Functionally, involved in the oxidative degradation of abscisic acid, but not in the isomerization of the produced 8'-hydroxyabscisic acid (8'-OH-ABA) to (-)-phaseic acid (PA). The protein is Abscisic acid 8'-hydroxylase 4 (CYP707A4) of Arabidopsis thaliana (Mouse-ear cress).